A 480-amino-acid chain; its full sequence is Protein nucleotidyltransferase YdiU (480 aa).

The ATP site is built by glycine 86, glycine 88, arginine 89, lysine 109, aspartate 121, glycine 122, arginine 172, and arginine 179. The active-site Proton acceptor is the aspartate 248. Residues asparagine 249 and aspartate 258 each coordinate Mg(2+). Residue aspartate 258 coordinates ATP.

This sequence belongs to the SELO family. It depends on Mg(2+) as a cofactor. Requires Mn(2+) as cofactor.

The catalysed reaction is L-seryl-[protein] + ATP = 3-O-(5'-adenylyl)-L-seryl-[protein] + diphosphate. It carries out the reaction L-threonyl-[protein] + ATP = 3-O-(5'-adenylyl)-L-threonyl-[protein] + diphosphate. The enzyme catalyses L-tyrosyl-[protein] + ATP = O-(5'-adenylyl)-L-tyrosyl-[protein] + diphosphate. It catalyses the reaction L-histidyl-[protein] + UTP = N(tele)-(5'-uridylyl)-L-histidyl-[protein] + diphosphate. The catalysed reaction is L-seryl-[protein] + UTP = O-(5'-uridylyl)-L-seryl-[protein] + diphosphate. It carries out the reaction L-tyrosyl-[protein] + UTP = O-(5'-uridylyl)-L-tyrosyl-[protein] + diphosphate. In terms of biological role, nucleotidyltransferase involved in the post-translational modification of proteins. It can catalyze the addition of adenosine monophosphate (AMP) or uridine monophosphate (UMP) to a protein, resulting in modifications known as AMPylation and UMPylation. The chain is Protein nucleotidyltransferase YdiU from Salmonella heidelberg (strain SL476).